The following is a 983-amino-acid chain: MASNPDRGEILLTELQGDSRTLPFSENVSAVQKLDFSDTMVQQKLDDIKDRIKREIRKELKIKEGAENLRKVTTDKKNLAYVDNILKKSNKKLEELHHKLQELNAHIVVSDPEDSTDCPRTPDTPNSDSRSSTSNNRLMALQKQLDIELKVKQGAENMIQMYSNGSSKDRKLHGTAQQLLQDSKTKIEVIRMQILQAVQTNELAFDNAKPVISPLELRMEELRHHFKIEFAVAEGAKNVMKLLGSGKVTDRKALSEAQARFNESSQKLDLLKYSLEQRLNELPRNHPKSSVVIEELSLVASPTLSPRQSMLSTQNQYSTLSKPAALTGTLEVRLMGCQDILENVPGRSKATSVALPGWSPSDNRSSFMSRTSKSKSGSSRNLLKTDDLSNDVCAVLKLDNTVVGQTSWKPISNQSWDQKFTLELDRSRELEISVYWRDWRSLCAVKFLRLEDFLDNQRHGMCLYLEPQGTLFAEVTFFNPVIERRPKLQRQKKIFSKQQGKTFLRAPQMNINIATWGRLVRRAIPTVNHSGTFSPQTPVPATVPVVDARIPDLAPPASDSTVTKLDFDLEPEPPPAPPRASSLGETDESSELRVLDIPGQGSETVFNIENDRNNLRPKSKSEYELSIPDSGRSCWGVGELDDKRAQQRFQFSLQDFRCCAVLGRGHFGKVLLAEYKHTNEMFAIKALKKGDIVARDEVDSLMCEKRIFETVNSVRHPFLVNLFACFQTKEHVCFVMEYAAGGDLMMHIHTDVFSEPRAVFYAACVVLGLQYLHEHKIVYRDLKLDNLLLDTEGFVKIADFGLCKEGMGYGDRTSTFCGTPEFLAPEVLTETSYTRAVDWWGLGVLIYEMLVGESPFPGDDEEEVFDSIVNDEVRYPRFLSTEAISIMRRLLRRNPERRLGAGEKDAEDVKKHPFFRLTDWSALMDKKVKPPFVPTIRGREDVSNFDDEFTSEAPILTPPREPRILLEEEQEMFHDFDYVADWC.

The REM-1 1 domain occupies 33 to 109 (KLDFSDTMVQ…LQELNAHIVV (77 aa)). K77 bears the N6-acetyllysine mark. The interval 107–135 (IVVSDPEDSTDCPRTPDTPNSDSRSSTSN) is disordered. Position 110 is a phosphoserine (S110). A phosphothreonine mark is found at T121 and T124. The span at 121–135 (TPDTPNSDSRSSTSN) shows a compositional bias: low complexity. REM-1 domains lie at 121 to 203 (TPDT…TNEL) and 204 to 284 (AFDN…ELPR). Phosphoserine occurs at positions 301, 305, 359, and 361. The segment at 351 to 382 (TSVALPGWSPSDNRSSFMSRTSKSKSGSSRNL) is disordered. Residues 352–472 (SVALPGWSPS…LYLEPQGTLF (121 aa)) enclose the C2 domain. Over residues 364–380 (RSSFMSRTSKSKSGSSR) the composition is skewed to low complexity. Residues 381-462 (NLLKTDDLSN…FLDNQRHGMC (82 aa)) are necessary to rescue apical junction formation. Phosphoserine occurs at positions 534, 582, 619, and 630. The interval 553–588 (LAPPASDSTVTKLDFDLEPEPPPAPPRASSLGETDE) is disordered. The Protein kinase domain maps to 656–915 (FRCCAVLGRG…AEDVKKHPFF (260 aa)). Residues 662–670 (LGRGHFGKV) and K685 each bind ATP. The active-site Proton acceptor is D781. T815 carries the phosphothreonine; by PDPK1 modification. A necessary for the catalytic activity region spans residues 916–976 (RLTDWSALMD…EEEQEMFHDF (61 aa)). An AGC-kinase C-terminal domain is found at 916-983 (RLTDWSALMD…HDFDYVADWC (68 aa)). Position 951 is a phosphoserine (S951). T957 carries the post-translational modification Phosphothreonine. The negatively regulates the responsiveness of the catalytic activity by cardiolipin and is required for optimal activation by the GTP-bound RhoA stretch occupies residues 977-983 (DYVADWC).

This sequence belongs to the protein kinase superfamily. AGC Ser/Thr protein kinase family. PKC subfamily. Interacts (via the REM repeats) with RHOA (GTP-bound form preferentially) and interacts (via the REM repeats) with RAC1 (GTP-bound form preferentially); the interactions induce its autophosphorylation. Interacts with NCK1 (via SH3 domains). Interacts with RHOC. Interacts with NCK1 and NCK2. Interacts with CD44. Interacts (via C-terminal kinase domain) with PDPK1; the interaction stimulates PDPK1 kinase activity. Interacts with MAP3K2; the interaction activates PRK2 kinase activity in a MAP3K2-independent kinase activity. Interacts (via C-terminal domain) with AKT1; the interaction occurs with the C-terminal cleavage product of PRK2 in apoptotic cells. Interacts (via C-terminus) with PTPN13 (via PDZ 3 domain). Interacts with CDK10. Phosphorylated during mitosis. Autophosphorylated. Phosphorylated. Phosphorylated by CDK10. In terms of processing, activated by limited proteolysis with trypsin. Proteolytically cleaved by caspase-3 during the induction of apoptotic cell death. As to expression, ubiquitous. Highly expressed in liver and lung Expressed in astrocytes (at protein level). Ubiquitous.

The protein resides in the cytoplasm. The protein localises to the nucleus. Its subcellular location is the membrane. It localises to the cell projection. It is found in the lamellipodium. The protein resides in the cytoskeleton. The protein localises to the cleavage furrow. Its subcellular location is the midbody. It localises to the cell junction. The enzyme catalyses L-seryl-[protein] + ATP = O-phospho-L-seryl-[protein] + ADP + H(+). It carries out the reaction L-threonyl-[protein] + ATP = O-phospho-L-threonyl-[protein] + ADP + H(+). Kinase activity is activated upon binding to GTP-bound Rho1/Rac1 GTPases. Activated by caspase-3 (CASP3) cleavage during apoptosis. Activated by lipids, particularly cardiolipin and to a lesser extent by other acidic phospholipids and unsaturated fatty acids. Two specific sites, Thr-815 (activation loop of the kinase domain) and Thr-957 (turn motif), need to be phosphorylated for its full activation. Its function is as follows. PKC-related serine/threonine-protein kinase and Rho/Rac effector protein that participates in specific signal transduction responses in the cell. Plays a role in the regulation of cell cycle progression, actin cytoskeleton assembly, cell migration, cell adhesion, tumor cell invasion and transcription activation signaling processes. Phosphorylates CTTN in hyaluronan-induced astrocytes and hence decreases CTTN ability to associate with filamentous actin. Phosphorylates HDAC5, therefore lead to impair HDAC5 import. Direct RhoA target required for the regulation of the maturation of primordial junctions into apical junction formation in bronchial epithelial cells. Required for G2/M phases of the cell cycle progression and abscission during cytokinesis in a ECT2-dependent manner. Stimulates FYN kinase activity that is required for establishment of skin cell-cell adhesion during keratinocytes differentiation. Regulates epithelial bladder cells speed and direction of movement during cell migration and tumor cell invasion. Inhibits Akt pro-survival-induced kinase activity. Mediates Rho protein-induced transcriptional activation via the c-fos serum response factor (SRF). Involved in the negative regulation of ciliogenesis. This chain is Serine/threonine-protein kinase N2 (Pkn2), found in Mus musculus (Mouse).